The following is a 20-amino-acid chain: Elongation factor Tu (20 aa).

Belongs to the GTP-binding elongation factor family. EF-Tu/EF-1A subfamily. In terms of assembly, monomer.

The protein resides in the cytoplasm. Functionally, this protein promotes the GTP-dependent binding of aminoacyl-tRNA to the A-site of ribosomes during protein biosynthesis. In Mycoplasmopsis synoviae (Mycoplasma synoviae), this protein is Elongation factor Tu (tuf).